Here is a 354-residue protein sequence, read N- to C-terminus: Uroporphyrinogen decarboxylase (354 aa).

Substrate contacts are provided by residues 27-31 (RQAGR), Phe46, Asp77, Tyr154, Thr209, and His327.

This sequence belongs to the uroporphyrinogen decarboxylase family. Homodimer.

Its subcellular location is the cytoplasm. It carries out the reaction uroporphyrinogen III + 4 H(+) = coproporphyrinogen III + 4 CO2. It functions in the pathway porphyrin-containing compound metabolism; protoporphyrin-IX biosynthesis; coproporphyrinogen-III from 5-aminolevulinate: step 4/4. Functionally, catalyzes the decarboxylation of four acetate groups of uroporphyrinogen-III to yield coproporphyrinogen-III. The chain is Uroporphyrinogen decarboxylase from Escherichia coli O157:H7.